A 901-amino-acid chain; its full sequence is Glutamate receptor 2.1 (901 aa).

Positions 1 to 25 (MKRENNLVLSLLFFVIVFLMQVGEA) are cleaved as a signal peptide. Residues 26-574 (QNRITNVNVG…SSTIFLMPLT (549 aa)) are Extracellular-facing. Residues N46, N53, N204, N267, N331, N342, N461, N477, and N536 are each glycosylated (N-linked (GlcNAc...) asparagine). The helical transmembrane segment at 575-595 (LALWLISLLSFFIIGLVVWVL) threads the bilayer. Topologically, residues 596–604 (EHRVNPDFD) are cytoplasmic. Residues 605–625 (GPGQYQLSTIFWFSFSIMVFA) traverse the membrane as a helical segment. Topologically, residues 626 to 629 (PRER) are cytoplasmic. Residues 630 to 650 (VLSFWARVVVIIWYFLVLVLT) traverse the membrane as a helical segment. Topologically, residues 651–823 (QSYTASLASL…VSFRQLGFDS (173 aa)) are extracellular. The helical transmembrane segment at 824-844 (FWVLFLVAAIVCTMALLKFVY) threads the bilayer. At 845–901 (QFLKENPNQRNLRVLWEKFNEPDQKSYIKDVTKCQCSSGQGMPKNGQEGANAVNNGN) the chain is on the cytoplasmic side.

The protein belongs to the glutamate-gated ion channel (TC 1.A.10.1) family. May form heteromers. As to expression, expressed predominantly in roots. First strongly detected in all cell types of the root except at the apex. Later expressed at the root-shoot junction.

The protein localises to the membrane. In terms of biological role, glutamate-gated receptor that probably acts as a non-selective cation channel. May be involved in light-signal transduction and calcium homeostasis via the regulation of calcium influx into cells. In Arabidopsis thaliana (Mouse-ear cress), this protein is Glutamate receptor 2.1 (GLR2.1).